Reading from the N-terminus, the 172-residue chain is Keratin, high-sulfur matrix protein, B2A (172 aa).

The residue at position 2 (alanine 2) is an N-acetylalanine. Repeats lie at residues proline 27–glutamine 36, proline 37–glutamine 46, proline 47–glutamine 56, proline 57–glutamine 66, and proline 67–glutamate 76.

In terms of biological role, the keratin products of mammalian epidermal derivatives such as wool and hair consist of microfibrils embedded in a rigid matrix of other proteins. The matrix proteins include the high-sulfur and high-tyrosine keratins, having molecular weights of 6-20 kDa, whereas the microfibrils contain the larger, low-sulfur keratins (40-56 kDa). This is Keratin, high-sulfur matrix protein, B2A from Ovis aries (Sheep).